Consider the following 327-residue polypeptide: FERM domain-containing protein 6 (327 aa).

The region spanning 16–320 (RRVCIFLPND…NSHRLYMNLQ (305 aa)) is the FERM domain.

It is found in the cytoplasm. The protein localises to the cell membrane. The sequence is that of FERM domain-containing protein 6 (Frmd6) from Rattus norvegicus (Rat).